A 309-amino-acid polypeptide reads, in one-letter code: MMSFLHIVFSILVVVAFILGNFANGFIALINFIAWVKRQKISSADQIIAALAVSRVGLLWVILLHWYSTVLNPTSSNLKVIIFISNAWAVTNHFSIWLATSLSIFYLLKIVNFSRLIFHHLKRKAKSVVLVIVLGSLFFLVCXLVMKNTYINVWTEECEGNVTWKIKLRNAMHLSNLTVAMLANLIPFTLTLISFLLLIYSLCKHLKKMQLHGKGSQDPSTKIHIKALQTVTSFLILLAIYFLCLITSFWNSKMRPKEIVLMLCQAFGIIYPSFHSFILIWGNKTLKQTFLSVLWQVTCWAKGQNQSTP.

The Extracellular segment spans residues 1-6 (MMSFLH). The chain crosses the membrane as a helical span at residues 7–27 (IVFSILVVVAFILGNFANGFI). Over 28–46 (ALINFIAWVKRQKISSADQ) the chain is Cytoplasmic. A helical transmembrane segment spans residues 47 to 67 (IIAALAVSRVGLLWVILLHWY). The Extracellular portion of the chain corresponds to 68-79 (STVLNPTSSNLK). A helical membrane pass occupies residues 80–100 (VIIFISNAWAVTNHFSIWLAT). Topologically, residues 101–125 (SLSIFYLLKIVNFSRLIFHHLKRKA) are cytoplasmic. The helical transmembrane segment at 126–146 (KSVVLVIVLGSLFFLVCXLVM) threads the bilayer. The Extracellular segment spans residues 147–178 (KNTYINVWTEECEGNVTWKIKLRNAMHLSNLT). A helical membrane pass occupies residues 179–199 (VAMLANLIPFTLTLISFLLLI). At 200–229 (YSLCKHLKKMQLHGKGSQDPSTKIHIKALQ) the chain is on the cytoplasmic side. A helical membrane pass occupies residues 230 to 250 (TVTSFLILLAIYFLCLITSFW). Topologically, residues 251–259 (NSKMRPKEI) are extracellular. A helical membrane pass occupies residues 260–280 (VLMLCQAFGIIYPSFHSFILI). The Cytoplasmic segment spans residues 281–309 (WGNKTLKQTFLSVLWQVTCWAKGQNQSTP).

Belongs to the G-protein coupled receptor T2R family.

It localises to the membrane. In terms of biological role, receptor that may play a role in the perception of bitterness and is gustducin-linked. May play a role in sensing the chemical composition of the gastrointestinal content. The activity of this receptor may stimulate alpha gustducin, mediate PLC-beta-2 activation and lead to the gating of TRPM5. This Pan troglodytes (Chimpanzee) protein is Taste receptor type 2 member 20 (TAS2R20).